The following is a 403-amino-acid chain: MVIRAFLDKIEHNFEKGGRFEKWYALYEAVDTFLYRPASVTKTTAHVRDGIDLKRMMILVWLCTFPAMFFGMWNTGYQANLIFAGNPELLAAQGGWRFALTGALAGFDPNSLWDCFVQGAAYFLPIYAVTFIVGGFWEVLFASVRKHEINEGFFVTSVLFSLTLPPSIPLWQVAMGISFGVVIGKEVFGGTGKNFLNPALVGRAFLFFAYPAQLSGDGVWTAVDGYAGATALSLAAAGGVEGVVSAGVSWMDAFLGIEQGSIGETSTLAILIGGAVLLLTKIAAWRIVAGVMVGMVVLSSLFNLIGSDTNPMFAMPWYWHLVAGGFAFGTLFMATDPVSASMTNTGKWAFGILIGVMVVLIRVVNPAFPEGMMLAILFGNLCAPLIDHFVVQANIKRRLARNV.

Helical transmembrane passes span 56 to 76 (MMILVWLCTFPAMFFGMWNTG), 121 to 141 (AYFLPIYAVTFIVGGFWEVLF), 164 to 184 (LPPSIPLWQVAMGISFGVVIG), and 195 to 212 (FLNPALVGRAFLFFAYPA). Residue Thr-230 is modified to FMN phosphoryl threonine. 6 helical membrane passes run 237–257 (AGGVEGVVSAGVSWMDAFLGI), 265–285 (TSTLAILIGGAVLLLTKIAAW), 287–307 (IVAGVMVGMVVLSSLFNLIGS), 312–332 (MFAMPWYWHLVAGGFAFGTLF), 348–368 (WAFGILIGVMVVLIRVVNPAF), and 371–391 (GMMLAILFGNLCAPLIDHFVV).

It belongs to the NqrB/RnfD family. In terms of assembly, composed of six subunits; NqrA, NqrB, NqrC, NqrD, NqrE and NqrF. Requires FMN as cofactor.

Its subcellular location is the cell inner membrane. It carries out the reaction a ubiquinone + n Na(+)(in) + NADH + H(+) = a ubiquinol + n Na(+)(out) + NAD(+). Its function is as follows. NQR complex catalyzes the reduction of ubiquinone-1 to ubiquinol by two successive reactions, coupled with the transport of Na(+) ions from the cytoplasm to the periplasm. NqrA to NqrE are probably involved in the second step, the conversion of ubisemiquinone to ubiquinol. This chain is Na(+)-translocating NADH-quinone reductase subunit B, found in Azotobacter vinelandii (strain DJ / ATCC BAA-1303).